Reading from the N-terminus, the 222-residue chain is Transmembrane reductase CYB561D2 (222 aa).

Over 2–17 (ALSVETESHIYRALRT) the chain is Cytoplasmic. One can recognise a Cytochrome b561 domain in the interval 14–217 (ALRTVSGAAA…NQVSNAYLYR (204 aa)). Residues 18–38 (VSGAAAHLVALGFTIFVAVLA) traverse the membrane as a helical segment. Residues 39–46 (RPGSSLFS) are Lumenal-facing. A helical membrane pass occupies residues 47-67 (WHPVLMSLAFSFLMTEALLVF). Residue histidine 48 coordinates heme b. The Cytoplasmic segment spans residues 68–85 (SPESSLLRSLSRKGRARC). The heme b site is built by histidine 86 and histidine 120. The helical transmembrane segment at 86-106 (HWVLQLLALLCALLGLGLVIL) threads the bilayer. The Lumenal segment spans residues 107 to 122 (HKEQLGKAHLATWHGR). Residues 123–143 (AGLLAVLWAGLQCSGGVGLLY) form a helical membrane-spanning segment. The Cytoplasmic portion of the chain corresponds to 144–162 (PKLLPRWPLAKLKLYHATS). Histidine 159 provides a ligand contact to heme b. The helical transmembrane segment at 163–183 (GLVGYLLGGASLLLGMCSLWF) threads the bilayer. Topologically, residues 184–186 (TAT) are lumenal. The helical transmembrane segment at 187 to 207 (VTGGVWYLAVLCPVITSLVIM) threads the bilayer. The Cytoplasmic segment spans residues 208–222 (NQVSNAYLYRKRIQP).

Requires heme b as cofactor.

The protein resides in the endoplasmic reticulum membrane. It is found in the cytoplasmic vesicle membrane. The enzyme catalyses monodehydro-L-ascorbate radical(out) + L-ascorbate(in) = monodehydro-L-ascorbate radical(in) + L-ascorbate(out). It catalyses the reaction Fe(3+)(out) + L-ascorbate(in) = monodehydro-L-ascorbate radical(in) + Fe(2+)(out) + H(+). Functionally, transmembrane reductase that may use ascorbate as an electron donor in the cytoplasm and transfer electrons across endoplasmic reticulum membranes to reduce monodehydro-L-ascorbate radical and iron cations Fe(3+) in the lumen of that compartment. This chain is Transmembrane reductase CYB561D2, found in Bos taurus (Bovine).